We begin with the raw amino-acid sequence, 475 residues long: Ribulose bisphosphate carboxylase large chain (475 aa).

Residues 1-2 (MS) constitute a propeptide that is removed on maturation. The residue at position 3 (Pro-3) is an N-acetylproline. Lys-14 carries the N6,N6,N6-trimethyllysine modification. The substrate site is built by Asn-123 and Thr-173. Lys-175 serves as the catalytic Proton acceptor. A substrate-binding site is contributed by Lys-177. Residues Lys-201, Asp-203, and Glu-204 each coordinate Mg(2+). N6-carboxylysine is present on Lys-201. Catalysis depends on His-294, which acts as the Proton acceptor. 3 residues coordinate substrate: Arg-295, His-327, and Ser-379.

The protein belongs to the RuBisCO large chain family. Type I subfamily. As to quaternary structure, heterohexadecamer of 8 large chains and 8 small chains; disulfide-linked. The disulfide link is formed within the large subunit homodimers. It depends on Mg(2+) as a cofactor. The disulfide bond which can form in the large chain dimeric partners within the hexadecamer appears to be associated with oxidative stress and protein turnover.

The protein localises to the plastid. The protein resides in the chloroplast. The enzyme catalyses 2 (2R)-3-phosphoglycerate + 2 H(+) = D-ribulose 1,5-bisphosphate + CO2 + H2O. It carries out the reaction D-ribulose 1,5-bisphosphate + O2 = 2-phosphoglycolate + (2R)-3-phosphoglycerate + 2 H(+). In terms of biological role, ruBisCO catalyzes two reactions: the carboxylation of D-ribulose 1,5-bisphosphate, the primary event in carbon dioxide fixation, as well as the oxidative fragmentation of the pentose substrate in the photorespiration process. Both reactions occur simultaneously and in competition at the same active site. This is Ribulose bisphosphate carboxylase large chain from Keteleeria davidiana (David's keteleeria).